Consider the following 274-residue polypeptide: 2,3,4,5-tetrahydropyridine-2,6-dicarboxylate N-succinyltransferase (274 aa).

It belongs to the transferase hexapeptide repeat family.

It localises to the cytoplasm. The enzyme catalyses (S)-2,3,4,5-tetrahydrodipicolinate + succinyl-CoA + H2O = (S)-2-succinylamino-6-oxoheptanedioate + CoA. It participates in amino-acid biosynthesis; L-lysine biosynthesis via DAP pathway; LL-2,6-diaminopimelate from (S)-tetrahydrodipicolinate (succinylase route): step 1/3. The chain is 2,3,4,5-tetrahydropyridine-2,6-dicarboxylate N-succinyltransferase from Shigella boydii serotype 18 (strain CDC 3083-94 / BS512).